A 760-amino-acid chain; its full sequence is Cyclin-D-binding Myb-like transcription factor 1 (760 aa).

An interaction with CCND2 region spans residues 1–237 (MSTVEEDSDT…TPEEIEKLKE (237 aa)). The tract at residues 87–170 (VTMTATTEVA…IDILMNNIER (84 aa)) is required for transcriptional activation. The interval 87–458 (VTMTATTEVA…DNTAISSSPM (372 aa)) is required for DNA-binding. The tract at residues 176–760 (GIKDATEIIF…KDVEDLVNCH (585 aa)) is interaction with CCND1, CCND2 and CCND3. Residues 225–263 (GKYTPEEIEKLKELRIKHGNDWATIGAALGRSASSVKDR) enclose the Myb-like 1 domain. The 66-residue stretch at 268-333 (KDTCNTGKWT…KWLNYLNWKQ (66 aa)) folds into the HTH myb-type domain. A DNA-binding region (H-T-H motif) is located at residues 306–329 (WAAVAERVGTRSEKQCRSKWLNYL). A Myb-like 2 domain is found at 339 to 388 (WTKEDEINLILRIAELDVADENDINWDLLAEGWSSVRSPQWLRSKWWTIK). Disordered regions lie at residues 414–435 (KNNP…NTNS) and 738–760 (IGSS…VNCH). The tract at residues 459–760 (AALQIPVQIT…KDVEDLVNCH (302 aa)) is required for transcriptional activation.

This sequence belongs to the DMTF1 family. Interacts with the D-type cyclins CCND1, CCND2 and CCND3. Interaction with D-type cyclins may modulate transcriptional activation by this protein. Post-translationally, phosphorylated by the cyclin-D2/CDK4, cyclin-D3/CDK4 and cyclin-D2/CDK6 complexes and to a lesser extent by the cyclin-D1/CDK4 complex. As to expression, expressed at relatively low levels in colonic mucosa, ovary, peripheral leukocytes, prostate and small intestine, and at higher levels in spleen, testis and thymus. Expressed in multiple regions of the brain and CNS including amygdala, caudate, corpus callosum, hippocampus, substantia nigra and subthalamic nucleus. Isoform 1 is the predominant isoform in monocytes, macrophages and neutrophils, isoform 2 is most strongly expressed in peripheral blood leukocytes and quiescent CD34 positive cells, and isoform 3 is expressed at low levels in all hematopoietic cell types. Expression is frequently reduced in non-small-cell lung carcinomas (NSCLC) due to hemizygous gene deletion, strongly suggesting that this locus is haploinsufficient for tumor suppression. Loss of this locus frequently occurs in tumors which retain wild-type CDKN2A/ARF and p53/TP53 loci. Hemizygous gene deletion has also been observed in leukemic blasts from patients with abnormalities of the long arm of chromosome 7.

It is found in the nucleus. In terms of biological role, transcriptional activator which activates the CDKN2A/ARF locus in response to Ras-Raf signaling, thereby promoting p53/TP53-dependent growth arrest. Binds to the consensus sequence 5'-CCCG[GT]ATGT-3'. Isoform 1 may cooperate with MYB to activate transcription of the ANPEP gene. Isoform 2 may antagonize transcriptional activation by isoform 1. The sequence is that of Cyclin-D-binding Myb-like transcription factor 1 (DMTF1) from Homo sapiens (Human).